The chain runs to 430 residues: Pre-B-cell leukemia transcription factor 1 (430 aa).

Residues 1 to 40 (MDEQPRLMHSHAGVGMAGHPGLSQHLQDGAGGTEGEGGRK) form a disordered region. The region spanning 38–232 (GRKQDIGDIL…VMILRSRFLD (195 aa)) is the PBC domain. A PBC-A region spans residues 45-124 (DILQQIMTIT…EGVAGPEKGG (80 aa)). A PBC-B region spans residues 127–232 (AAAAAAAAAS…VMILRSRFLD (106 aa)). Residues 233 to 295 (ARRKRRNFNK…NKRIRYKKNI (63 aa)) constitute a DNA-binding region (homeobox; TALE-type). Disordered stretches follow at residues 317–338 (SAHG…SSSF) and 395–430 (SPQG…DTSN). Low complexity predominate over residues 323–338 (ANSPSTPNSAGSSSSF). The segment covering 407 to 418 (DATTPSSVTSPT) has biased composition (polar residues).

This sequence belongs to the TALE/PBX homeobox family. Forms a heterodimer with MEIS1 which binds DNA. The PBX1-MEIS1 heterodimer binds a cAMP-responsive sequence in CYP17. It also binds a consensus region in the SOX3 promoter. PBX1 forms heterotrimers with MEIS1 and a number of HOX proteins including HOXA9, HOXD4, HOXD9 and HOXD10. Forms heterodimers with HOXA1, HOXA5, HOXB7 and HOXB8 which bind the 5'-TGATTGAT-3' consensus sequence. Also forms heterodimers with HOXA5, HOXB7, HOXB8, HOXC8 and HOXD4 which bind the 5'-ATCAATCAA-3' consensus sequence. Interacts with PBXIP1. Interacts with TLX1. Interacts with FOXC1. Interacts with MN1. As to quaternary structure, interacts with MEIS2 isoform 4, SP1, SP3 and KLF4. In terms of assembly, part of a PDX1:PBX1b:MEIS2B complex; PBX1b recruits MEIS2B to the complex. As to expression, expressed in the kidney. Expressed in the endothelial cells of the glomeruli and interstitium (at protein level). Expressed in all tissues except in cells of the B and T lineage. Expressed strongly in kidney and brain.

The protein localises to the nucleus. In terms of biological role, transcription factor which binds the DNA sequence 5'-TGATTGAT-3' as part of a heterodimer with HOX proteins such as HOXA1, HOXA5, HOXB7 and HOXB8. Binds to the DNA sequence 5'-TGATTGAC-3' in complex with a nuclear factor which is not a class I HOX protein. Has also been shown to bind the DNA sequence 5'-ATCAATCAA-3' cooperatively with HOXA5, HOXB7, HOXB8, HOXC8 and HOXD4. Acts as a transcriptional activator of PF4 in complex with MEIS1. Also activates transcription of SOX3 in complex with MEIS1 by binding to the 5'-TGATTGAC-3' consensus sequence. In natural killer cells, binds to the NFIL3 promoter and acts as a transcriptional activator of NFIL3, promoting natural killer cell development. Plays a role in the cAMP-dependent regulation of CYP17A1 gene expression via its cAMP-regulatory sequence (CRS1). Probably in complex with MEIS2, involved in transcriptional regulation by KLF4. Acts as a transcriptional activator of NKX2-5 and a transcriptional repressor of CDKN2B. Together with NKX2-5, required for spleen development through a mechanism that involves CDKN2B repression. Functionally, as part of a PDX1:PBX1b:MEIS2B complex in pancreatic acinar cells, is involved in the transcriptional activation of the ELA1 enhancer; the complex binds to the enhancer B element and cooperates with the transcription factor 1 complex (PTF1) bound to the enhancer A element. The chain is Pre-B-cell leukemia transcription factor 1 (PBX1) from Homo sapiens (Human).